A 207-amino-acid chain; its full sequence is Protein GrpE (207 aa).

Positions 1–11 are enriched in basic and acidic residues; it reads MTETDGQKDNN. Positions 1–40 are disordered; that stretch reads MTETDGQKDNNQDTAQAAADPVVSKPYIMPDDPEEGSNEA.

It belongs to the GrpE family. As to quaternary structure, homodimer.

It is found in the cytoplasm. Participates actively in the response to hyperosmotic and heat shock by preventing the aggregation of stress-denatured proteins, in association with DnaK and GrpE. It is the nucleotide exchange factor for DnaK and may function as a thermosensor. Unfolded proteins bind initially to DnaJ; upon interaction with the DnaJ-bound protein, DnaK hydrolyzes its bound ATP, resulting in the formation of a stable complex. GrpE releases ADP from DnaK; ATP binding to DnaK triggers the release of the substrate protein, thus completing the reaction cycle. Several rounds of ATP-dependent interactions between DnaJ, DnaK and GrpE are required for fully efficient folding. The protein is Protein GrpE of Rhodopseudomonas palustris (strain ATCC BAA-98 / CGA009).